A 285-amino-acid polypeptide reads, in one-letter code: HTH-type transcriptional regulator MurR (285 aa).

One can recognise an HTH rpiR-type domain in the interval Met-1 to Ser-77. Positions Ser-37–Gln-56 form a DNA-binding region, H-T-H motif. In terms of domain architecture, SIS spans Ile-128–Val-268.

As to quaternary structure, homotetramer.

It participates in amino-sugar metabolism; N-acetylmuramate degradation [regulation]. Functionally, represses the expression of the murPQ operon involved in the uptake and degradation of N-acetylmuramic acid (MurNAc). Binds to two adjacent inverted repeats within the operator region. MurNAc 6-phosphate, the substrate of MurQ, is the specific inducer that weakens binding of MurR to the operator. This chain is HTH-type transcriptional regulator MurR, found in Escherichia coli O157:H7.